Here is a 291-residue protein sequence, read N- to C-terminus: Energy-coupling factor transporter ATP-binding protein EcfA2 (291 aa).

The region spanning 3–246 (ITFKDVSYTY…PEWLTSKQLG (244 aa)) is the ABC transporter domain. Residue 40–47 (GHTGSGKS) coordinates ATP.

This sequence belongs to the ABC transporter superfamily. Energy-coupling factor EcfA family. In terms of assembly, forms a stable energy-coupling factor (ECF) transporter complex composed of 2 membrane-embedded substrate-binding proteins (S component), 2 ATP-binding proteins (A component) and 2 transmembrane proteins (T component).

Its subcellular location is the cell membrane. Its function is as follows. ATP-binding (A) component of a common energy-coupling factor (ECF) ABC-transporter complex. Unlike classic ABC transporters this ECF transporter provides the energy necessary to transport a number of different substrates. The protein is Energy-coupling factor transporter ATP-binding protein EcfA2 of Latilactobacillus sakei subsp. sakei (strain 23K) (Lactobacillus sakei subsp. sakei).